A 530-amino-acid chain; its full sequence is Autoinducer-2 kinase (530 aa).

It belongs to the FGGY kinase family.

The protein resides in the cytoplasm. It carries out the reaction (S)-4,5-dihydroxypentane-2,3-dione + ATP = (2S)-2-hydroxy-3,4-dioxopentyl phosphate + ADP + H(+). In terms of biological role, catalyzes the phosphorylation of autoinducer-2 (AI-2) to phospho-AI-2, which subsequently inactivates the transcriptional regulator LsrR and leads to the transcription of the lsr operon. Phosphorylates the ring-open form of (S)-4,5-dihydroxypentane-2,3-dione (DPD), which is the precursor to all AI-2 signaling molecules, at the C5 position. The sequence is that of Autoinducer-2 kinase from Escherichia coli O9:H4 (strain HS).